Reading from the N-terminus, the 123-residue chain is Ribosome-binding factor A (123 aa).

This sequence belongs to the RbfA family. As to quaternary structure, monomer. Binds 30S ribosomal subunits, but not 50S ribosomal subunits or 70S ribosomes.

It localises to the cytoplasm. Its function is as follows. One of several proteins that assist in the late maturation steps of the functional core of the 30S ribosomal subunit. Associates with free 30S ribosomal subunits (but not with 30S subunits that are part of 70S ribosomes or polysomes). Required for efficient processing of 16S rRNA. May interact with the 5'-terminal helix region of 16S rRNA. This chain is Ribosome-binding factor A, found in Cupriavidus taiwanensis (strain DSM 17343 / BCRC 17206 / CCUG 44338 / CIP 107171 / LMG 19424 / R1) (Ralstonia taiwanensis (strain LMG 19424)).